The sequence spans 228 residues: 2,3-bisphosphoglycerate-dependent phosphoglycerate mutase (228 aa).

Substrate-binding positions include 8–15 (RHGQSEWN), 21–22 (TG), Arg60, 87–90 (ERHY), Lys98, 114–115 (RR), and 183–184 (GN). His9 functions as the Tele-phosphohistidine intermediate in the catalytic mechanism. Glu87 functions as the Proton donor/acceptor in the catalytic mechanism.

This sequence belongs to the phosphoglycerate mutase family. BPG-dependent PGAM subfamily.

The enzyme catalyses (2R)-2-phosphoglycerate = (2R)-3-phosphoglycerate. The protein operates within carbohydrate degradation; glycolysis; pyruvate from D-glyceraldehyde 3-phosphate: step 3/5. Functionally, catalyzes the interconversion of 2-phosphoglycerate and 3-phosphoglycerate. This is 2,3-bisphosphoglycerate-dependent phosphoglycerate mutase from Staphylococcus aureus (strain Mu3 / ATCC 700698).